Reading from the N-terminus, the 120-residue chain is Ribosome-binding factor A (120 aa).

Belongs to the RbfA family. Monomer. Binds 30S ribosomal subunits, but not 50S ribosomal subunits or 70S ribosomes.

The protein localises to the cytoplasm. One of several proteins that assist in the late maturation steps of the functional core of the 30S ribosomal subunit. Associates with free 30S ribosomal subunits (but not with 30S subunits that are part of 70S ribosomes or polysomes). Required for efficient processing of 16S rRNA. May interact with the 5'-terminal helix region of 16S rRNA. The sequence is that of Ribosome-binding factor A from Limosilactobacillus fermentum (strain NBRC 3956 / LMG 18251) (Lactobacillus fermentum).